The following is a 245-amino-acid chain: Biosynthetic peptidoglycan transglycosylase (245 aa).

A helical transmembrane segment spans residues 29-49; it reads IVLAVLIVLILPYALIVFYLL.

Belongs to the glycosyltransferase 51 family.

The protein localises to the cell inner membrane. It catalyses the reaction [GlcNAc-(1-&gt;4)-Mur2Ac(oyl-L-Ala-gamma-D-Glu-L-Lys-D-Ala-D-Ala)](n)-di-trans,octa-cis-undecaprenyl diphosphate + beta-D-GlcNAc-(1-&gt;4)-Mur2Ac(oyl-L-Ala-gamma-D-Glu-L-Lys-D-Ala-D-Ala)-di-trans,octa-cis-undecaprenyl diphosphate = [GlcNAc-(1-&gt;4)-Mur2Ac(oyl-L-Ala-gamma-D-Glu-L-Lys-D-Ala-D-Ala)](n+1)-di-trans,octa-cis-undecaprenyl diphosphate + di-trans,octa-cis-undecaprenyl diphosphate + H(+). It functions in the pathway cell wall biogenesis; peptidoglycan biosynthesis. Peptidoglycan polymerase that catalyzes glycan chain elongation from lipid-linked precursors. The sequence is that of Biosynthetic peptidoglycan transglycosylase from Rhizobium johnstonii (strain DSM 114642 / LMG 32736 / 3841) (Rhizobium leguminosarum bv. viciae).